Here is a 373-residue protein sequence, read N- to C-terminus: Flagellar P-ring protein (373 aa).

Residues 1–26 (MKLFFRFVTLVAVLAMSLANVAPAWA) form the signal peptide.

The protein belongs to the FlgI family. In terms of assembly, the basal body constitutes a major portion of the flagellar organelle and consists of four rings (L,P,S, and M) mounted on a central rod.

The protein resides in the periplasm. It localises to the bacterial flagellum basal body. Assembles around the rod to form the L-ring and probably protects the motor/basal body from shearing forces during rotation. The sequence is that of Flagellar P-ring protein from Rhizobium johnstonii (strain DSM 114642 / LMG 32736 / 3841) (Rhizobium leguminosarum bv. viciae).